Here is a 73-residue protein sequence, read N- to C-terminus: Salivary thrombin inhibitor XC-42 (73 aa).

Residues 1–23 (MKLQFLFIFIAFCVMLFAQIATA) form the signal peptide.

Interacts with human F2 (thrombin). In terms of tissue distribution, salivary gland (at protein level).

The protein localises to the secreted. Its function is as follows. Acts as a competitive inhibitor of host thrombin. The protein is Salivary thrombin inhibitor XC-42 of Xenopsylla cheopis (Oriental rat flea).